Consider the following 234-residue polypeptide: MARKKAVKVEADPRLNAVNEALKFIKDGMIVGLGSGTTANLFIAELGKKISEEGLNVFGVPTSFESRMMAIQYGIPLVSLDEYGELDIAVDGADEVNKETLNVIKGGGGCHTQEKIIDYCAKELIIIVDESKLVDSLGENTPVPLEVLPFAYSSVLNELLKMNSAPSIRMADKKMGPVITDNGNMIIDVFIDLNNPEEVEKQLNNIPGVVENGIFTKVDKVIVGKSDKAEILKK.

Residues 35–38 (SGTT), 91–94 (DGAD), and 105–108 (KGGG) each bind substrate. The active-site Proton acceptor is the Glu-114. Lys-132 is a substrate binding site.

The protein belongs to the ribose 5-phosphate isomerase family. As to quaternary structure, homodimer.

The catalysed reaction is aldehydo-D-ribose 5-phosphate = D-ribulose 5-phosphate. It participates in carbohydrate degradation; pentose phosphate pathway; D-ribose 5-phosphate from D-ribulose 5-phosphate (non-oxidative stage): step 1/1. Its function is as follows. Catalyzes the reversible conversion of ribose-5-phosphate to ribulose 5-phosphate. This chain is Ribose-5-phosphate isomerase A, found in Methanococcus aeolicus (strain ATCC BAA-1280 / DSM 17508 / OCM 812 / Nankai-3).